The chain runs to 130 residues: Large ribosomal subunit protein bL12 (130 aa).

Belongs to the bacterial ribosomal protein bL12 family. Homodimer. Part of the ribosomal stalk of the 50S ribosomal subunit. Forms a multimeric L10(L12)X complex, where L10 forms an elongated spine to which 2 to 4 L12 dimers bind in a sequential fashion. Binds GTP-bound translation factors.

Forms part of the ribosomal stalk which helps the ribosome interact with GTP-bound translation factors. Is thus essential for accurate translation. This Mycolicibacterium paratuberculosis (strain ATCC BAA-968 / K-10) (Mycobacterium paratuberculosis) protein is Large ribosomal subunit protein bL12.